We begin with the raw amino-acid sequence, 483 residues long: MLTLDTLNVMLAVSEEGLIEEMIIALLASPQLAVFFEKFPRLKAAITDDVPRWREALRSRLKDARVPPELTEEVMCYQQSQLLSTPQFIVQLPQILDLLHRLNSPWAEQARQLVDANSTITSALHTLFLQRWRLSLIVQATTLNQQLLEEEREQLLSEVQERMTLSGQLEPILADNNTAAGRLWDMSAGQLKRGDYQLIVKYGEFLNEQPELKRLAEQLGRSREAKSIPRNDAQMETFRTMVREPATVPEQVDGLQQSDDILRLLPPELATLGITELEYEFYRRLVEKQLLTYRLHGESWREKVIERPVVHKDYDEQPRGPFIVCVDTSGSMGGFNEQCAKAFCLALMRIALAENRRCYIMLFSTEIVRYELSGPQGIEQAIRFLSQQFRGGTDLASCFRAIMERLQSREWFDADAVVISDFIAQRLPDDVTSKVKELQRVHQYRFHAVAMSAHGKPGIMRIFDHIWRFNTGMRSRLLRRWRR.

It belongs to the ViaA family. As to quaternary structure, homodimer. Interacts with RavA.

The protein resides in the cytoplasm. Component of the RavA-ViaA chaperone complex, which may act on the membrane to optimize the function of some of the respiratory chains. ViaA stimulates the ATPase activity of RavA. The polypeptide is Regulatory protein ViaA (Escherichia coli O7:K1 (strain IAI39 / ExPEC)).